We begin with the raw amino-acid sequence, 340 residues long: Protein RecA (340 aa).

65–72 is an ATP binding site; sequence GPESGGKT.

Belongs to the RecA family.

The protein resides in the cytoplasm. Functionally, can catalyze the hydrolysis of ATP in the presence of single-stranded DNA, the ATP-dependent uptake of single-stranded DNA by duplex DNA, and the ATP-dependent hybridization of homologous single-stranded DNAs. It interacts with LexA causing its activation and leading to its autocatalytic cleavage. The protein is Protein RecA of Thermus aquaticus.